An 864-amino-acid polypeptide reads, in one-letter code: DNA mismatch repair protein MutS (864 aa).

607-614 (GPNMGGKS) contacts ATP.

This sequence belongs to the DNA mismatch repair MutS family.

This protein is involved in the repair of mismatches in DNA. It is possible that it carries out the mismatch recognition step. This protein has a weak ATPase activity. In Neisseria meningitidis serogroup A / serotype 4A (strain DSM 15465 / Z2491), this protein is DNA mismatch repair protein MutS.